The primary structure comprises 184 residues: MAEEEFAELGSDRSLLLVDDDNAFLTRLARAMEKRGFQTEIAETVSAGKAIVQNRAPAYAVIDLRLEDGNGLEVVEALRERRPEARIVVLTGYGAIATAVAAVKMGATDYLSKPADANDITNALLAKGEALPPPPENPMSADRVRWEHIQRVYELCDRNVSETARRLNMHRRTLQRILAKRSPR.

Residues 14–128 (SLLLVDDDNA…DITNALLAKG (115 aa)) form the Response regulatory domain. Aspartate 63 bears the 4-aspartylphosphate mark.

Post-translationally, phosphorylated by RegB.

Functionally, member of the two-component regulatory system RegB/RegA. Involved in transactivating anaerobic expression of the photosynthetic apparatus. It is a transcriptional regulator that is responsible for activating expression of the puf, puh, and puc operons in response to a decrease in oxygen tension. This chain is Photosynthetic apparatus regulatory protein RegA (regA), found in Rhodobacter capsulatus (Rhodopseudomonas capsulata).